The primary structure comprises 160 residues: Arginine repressor (160 aa).

It belongs to the ArgR family.

It localises to the cytoplasm. It functions in the pathway amino-acid biosynthesis; L-arginine biosynthesis [regulation]. In terms of biological role, regulates arginine biosynthesis genes. The protein is Arginine repressor of Anaeromyxobacter sp. (strain K).